The sequence spans 676 residues: Double-stranded RNA-specific editase Adar (676 aa).

The tract at residues 1–51 (MKFDSRVMLNSANNNSPQHPVSAPSDINMNGYNRKLPQKRGYEMPKYSDPK) is disordered. The segment covering 8 to 31 (MLNSANNNSPQHPVSAPSDINMNG) has biased composition (polar residues). Residues 40–51 (RGYEMPKYSDPK) show a composition bias toward basic and acidic residues. DRBM domains are found at residues 61–127 (QPKN…SFIQ) and 197–272 (ITVD…SLCN). Residues 348–672 (SVSTGTKCVS…LKKPIEQDEF (325 aa)) enclose the A to I editase domain. H372 contributes to the Zn(2+) binding site. The Proton donor role is filled by E374. Residues C430 and C493 each coordinate Zn(2+).

Expressed in embryonic nervous system; late stage 13 sees ventral nerve cord expression which spreads to brain by stage 16. Expression is maintained through to adulthood.

In terms of biological role, has A-to-I RNA editing activity on extended dsRNA: edits RNA-binding protein Rnp4F. A-to-I editing of pre-mRNAs acts predominantly through nervous system targets to affect adult nervous system integrity, function and behavior. Essential for adaptation to environmental stresses, such as oxygen deprivation, and for the prevention of premature neuronal degeneration, through the editing of ion channels as targets. This Drosophila melanogaster (Fruit fly) protein is Double-stranded RNA-specific editase Adar.